The following is a 462-amino-acid chain: A-type ATP synthase subunit B (462 aa).

The protein belongs to the ATPase alpha/beta chains family. As to quaternary structure, has multiple subunits with at least A(3), B(3), C, D, E, F, H, I and proteolipid K(x).

The protein resides in the cell membrane. Functionally, component of the A-type ATP synthase that produces ATP from ADP in the presence of a proton gradient across the membrane. The B chain is a regulatory subunit. The polypeptide is A-type ATP synthase subunit B (Methanococcus maripaludis (strain C7 / ATCC BAA-1331)).